The following is a 408-amino-acid chain: Putative transporter AmpG 2 (408 aa).

12 helical membrane-spanning segments follow: residues 10–30, 49–69, 84–104, 109–129, 154–174, 177–197, 224–244, 261–281, 294–311, 315–337, 353–373, and 378–398; these read YISN…IYLL, IGLF…GPLL, YCLI…TNFN, FIPF…YDML, FRIG…IISW, VYRS…IYPL, WLII…LSIM, LGYK…GGFL, ALIY…LYFY, ITSL…SPFF, IALI…ISGY, and LGWT…YILI.

This sequence belongs to the major facilitator superfamily.

Its subcellular location is the cell inner membrane. This chain is Putative transporter AmpG 2 (ampG2), found in Rickettsia felis (strain ATCC VR-1525 / URRWXCal2) (Rickettsia azadi).